The following is a 261-amino-acid chain: Probable septum site-determining protein MinC (261 aa).

Positions Arg-106 to Thr-145 are disordered. A compositionally biased stretch (low complexity) spans Pro-118–Pro-144.

It belongs to the MinC family. Interacts with MinD and FtsZ.

Functionally, cell division inhibitor that blocks the formation of polar Z ring septums. Rapidly oscillates between the poles of the cell to destabilize FtsZ filaments that have formed before they mature into polar Z rings. Prevents FtsZ polymerization. The protein is Probable septum site-determining protein MinC of Burkholderia orbicola (strain AU 1054).